Here is a 188-residue protein sequence, read N- to C-terminus: EIEFTRTMHGIMRNISHFCSRTKSRTWGKDGWQKIVVCVIADGRQKVHPRTLNALAALGVYQDGIAKNIVNQKEVTAHVYEYTTQVSLDEGMKFKGAEKGIVPCQMIFCLKEQNKKKLNSHRWFFNAFGRALTPNVCILLDVGTKPDSKALYHLWKAFDQDSNVAGAAGEIKADKGKGWMCLLNPLVS.

It belongs to the chitin synthase family.

It is found in the cell membrane. It carries out the reaction [(1-&gt;4)-N-acetyl-beta-D-glucosaminyl](n) + UDP-N-acetyl-alpha-D-glucosamine = [(1-&gt;4)-N-acetyl-beta-D-glucosaminyl](n+1) + UDP + H(+). In terms of biological role, polymerizes chitin, a structural polymer of the cell wall and septum, by transferring the sugar moiety of UDP-GlcNAc to the non-reducing end of the growing chitin polymer. The polypeptide is Chitin synthase 2 (CHS2) (Exophiala jeanselmei (Dematiaceous fungus)).